An 815-amino-acid polypeptide reads, in one-letter code: DNA gyrase subunit B (815 aa).

The segment at 1-21 is disordered; sequence MEKTPATGSAVAPPPVEYGTD. The Toprim domain maps to 430–545; sequence SELYIVEGDS…AISTSRSRRS (116 aa). Mg(2+) is bound by residues E436, D509, and D511.

This sequence belongs to the type II topoisomerase GyrB family. Heterotetramer, composed of two GyrA and two GyrB chains. In the heterotetramer, GyrA contains the active site tyrosine that forms a transient covalent intermediate with DNA, while GyrB binds cofactors and catalyzes ATP hydrolysis. It depends on Mg(2+) as a cofactor. Requires Mn(2+) as cofactor. Ca(2+) serves as cofactor.

It is found in the cytoplasm. The enzyme catalyses ATP-dependent breakage, passage and rejoining of double-stranded DNA.. A type II topoisomerase that negatively supercoils closed circular double-stranded (ds) DNA in an ATP-dependent manner to modulate DNA topology and maintain chromosomes in an underwound state. Negative supercoiling favors strand separation, and DNA replication, transcription, recombination and repair, all of which involve strand separation. Also able to catalyze the interconversion of other topological isomers of dsDNA rings, including catenanes and knotted rings. Type II topoisomerases break and join 2 DNA strands simultaneously in an ATP-dependent manner. This chain is DNA gyrase subunit B, found in Myxococcus xanthus.